Reading from the N-terminus, the 468-residue chain is Ribosomal lysine N-methyltransferase 4 (468 aa).

Residues 22–302 (EKIGLNDYRH…KGEQLWNTYG (281 aa)) form the SET domain. Residues 188–225 (ISNENEKSAAETSIKEDKNGDAAKKNEGSANQDDEKLH) form a disordered region. Y301 contributes to the S-adenosyl-L-methionine binding site.

It belongs to the class V-like SAM-binding methyltransferase superfamily. Histone-lysine methyltransferase family. SETD6 subfamily.

The protein localises to the nucleus. In terms of biological role, S-adenosyl-L-methionine-dependent protein-lysine N-methyltransferase that monomethylates 60S ribosomal protein L42 (rpl42) at 'Lys-55'. The sequence is that of Ribosomal lysine N-methyltransferase 4 from Schizosaccharomyces pombe (strain 972 / ATCC 24843) (Fission yeast).